Reading from the N-terminus, the 369-residue chain is Flagellar P-ring protein 2 (369 aa).

The N-terminal stretch at 1–24 (MCAFAAILSLLSVLLMATSRSSDA) is a signal peptide.

It belongs to the FlgI family. As to quaternary structure, the basal body constitutes a major portion of the flagellar organelle and consists of four rings (L,P,S, and M) mounted on a central rod.

The protein resides in the periplasm. It localises to the bacterial flagellum basal body. In terms of biological role, assembles around the rod to form the L-ring and probably protects the motor/basal body from shearing forces during rotation. This chain is Flagellar P-ring protein 2, found in Burkholderia thailandensis (strain ATCC 700388 / DSM 13276 / CCUG 48851 / CIP 106301 / E264).